Here is a 424-residue protein sequence, read N- to C-terminus: Dapdiamide A synthase (424 aa).

In terms of domain architecture, ATP-grasp spans 120 to 318 (QEQLALKGVA…QISKLAQAVL (199 aa)). Residue 147–209 (AGHAHWPVVL…QEFLAGEEFV (63 aa)) coordinates ATP. Positions 275 and 287 each coordinate Mg(2+).

Mg(2+) is required as a cofactor. Requires Mn(2+) as cofactor.

The catalysed reaction is 3-[[[(2R,3R)-3-carboxyoxiran-2-yl]carbonyl]amino]-L-alanine + L-valine + ATP = dapdiamide E + ADP + phosphate + H(+). The enzyme catalyses N(3)-fumaramoyl-(S)-2,3-diaminopropanoate + L-valine + ATP = dapdiamide A + ADP + phosphate + H(+). It carries out the reaction N(3)-fumaramoyl-(S)-2,3-diaminopropanoate + L-isoleucine + ATP = dapdiamide B + ADP + phosphate + H(+). It catalyses the reaction N(3)-fumaramoyl-(S)-2,3-diaminopropanoate + L-leucine + ATP = dapdiamide C + ADP + phosphate + H(+). It participates in antibiotic biosynthesis. Its function is as follows. Involved in dapdiamide antibiotics biosynthesis. Ligates N-beta-fumaramoyl-DAP and valine, isoleucine or leucine to form dapdiamides A, B or C, respectively. Also ligates N-beta-epoxysuccinamoyl-DAP and valine to form dapdiamide E. In Enterobacter agglomerans (Erwinia herbicola), this protein is Dapdiamide A synthase.